The sequence spans 335 residues: Nicotinate-nucleotide--dimethylbenzimidazole phosphoribosyltransferase (335 aa).

The active-site Proton acceptor is E304.

Belongs to the CobT family.

The enzyme catalyses 5,6-dimethylbenzimidazole + nicotinate beta-D-ribonucleotide = alpha-ribazole 5'-phosphate + nicotinate + H(+). It functions in the pathway nucleoside biosynthesis; alpha-ribazole biosynthesis; alpha-ribazole from 5,6-dimethylbenzimidazole: step 1/2. Catalyzes the synthesis of alpha-ribazole-5'-phosphate from nicotinate mononucleotide (NAMN) and 5,6-dimethylbenzimidazole (DMB). The chain is Nicotinate-nucleotide--dimethylbenzimidazole phosphoribosyltransferase from Thermus thermophilus (strain ATCC 27634 / DSM 579 / HB8).